The primary structure comprises 134 residues: Large ribosomal subunit protein uL16c (134 aa).

Belongs to the universal ribosomal protein uL16 family. Part of the 50S ribosomal subunit.

It is found in the plastid. Its subcellular location is the chloroplast. The chain is Large ribosomal subunit protein uL16c from Guillardia theta (Cryptophyte).